The primary structure comprises 476 residues: Glutamyl-tRNA(Gln) amidotransferase subunit A (476 aa).

Active-site charge relay system residues include lysine 70 and serine 145. Serine 169 acts as the Acyl-ester intermediate in catalysis.

This sequence belongs to the amidase family. GatA subfamily. Heterotrimer of A, B and C subunits.

It carries out the reaction L-glutamyl-tRNA(Gln) + L-glutamine + ATP + H2O = L-glutaminyl-tRNA(Gln) + L-glutamate + ADP + phosphate + H(+). Functionally, allows the formation of correctly charged Gln-tRNA(Gln) through the transamidation of misacylated Glu-tRNA(Gln) in organisms which lack glutaminyl-tRNA synthetase. The reaction takes place in the presence of glutamine and ATP through an activated gamma-phospho-Glu-tRNA(Gln). This is Glutamyl-tRNA(Gln) amidotransferase subunit A from Methanosarcina acetivorans (strain ATCC 35395 / DSM 2834 / JCM 12185 / C2A).